The following is a 573-amino-acid chain: Potassium-transporting ATPase potassium-binding subunit (573 aa).

The next 10 membrane-spanning stretches (helical) occupy residues 6-26 (ILFALFIVTIALITKPLGSYI), 66-86 (FFSLVSFSVMAFIFVLVILLL), 135-155 (ALAVQNFVSAAVGLCVAIALI), 177-197 (IFWILLPISIVIAIVYIFQGV), 257-277 (IQMVSIFAIAAALTYTFGKWV), 283-303 (GWLIFGVMLVLFIISLVVMTI), 382-402 (IFGGVGAGFYGFFMFLMLAVF), 428-448 (MFALLISPCCVLVFTGLAAVI), 493-513 (ITIALSMLIGRFGVIFAVIML), and 537-557 (FIFAILVFFTILLIGGLTIFP).

The protein belongs to the KdpA family. As to quaternary structure, the system is composed of three essential subunits: KdpA, KdpB and KdpC.

The protein localises to the cell inner membrane. Its function is as follows. Part of the high-affinity ATP-driven potassium transport (or Kdp) system, which catalyzes the hydrolysis of ATP coupled with the electrogenic transport of potassium into the cytoplasm. This subunit binds the periplasmic potassium ions and delivers the ions to the membrane domain of KdpB through an intramembrane tunnel. This Francisella tularensis subsp. novicida (strain U112) protein is Potassium-transporting ATPase potassium-binding subunit.